Reading from the N-terminus, the 574-residue chain is ATP synthase subunit beta, mitochondrial (574 aa).

The N-terminal 26 residues, 1 to 26 (MLSSVRLAALRAGKTNSVFQAVRAFA), are a transit peptide targeting the mitochondrion. Residue 183-190 (GGAGVGKT) participates in ATP binding.

Belongs to the ATPase alpha/beta chains family. As to quaternary structure, F-type ATPases have 2 components, CF(1) - the catalytic core - and CF(0) - the membrane proton channel. CF(1) has five subunits: alpha(3), beta(3), gamma(1), delta(1), epsilon(1). CF(0) has three main subunits: a, b and c.

Its subcellular location is the mitochondrion. The protein resides in the mitochondrion inner membrane. It catalyses the reaction ATP + H2O + 4 H(+)(in) = ADP + phosphate + 5 H(+)(out). Functionally, mitochondrial membrane ATP synthase (F(1)F(0) ATP synthase or Complex V) produces ATP from ADP in the presence of a proton gradient across the membrane which is generated by electron transport complexes of the respiratory chain. F-type ATPases consist of two structural domains, F(1) - containing the extramembraneous catalytic core, and F(0) - containing the membrane proton channel, linked together by a central stalk and a peripheral stalk. During catalysis, ATP synthesis in the catalytic domain of F(1) is coupled via a rotary mechanism of the central stalk subunits to proton translocation. Subunits alpha and beta form the catalytic core in F(1). Rotation of the central stalk against the surrounding alpha(3)beta(3) subunits leads to hydrolysis of ATP in three separate catalytic sites on the beta subunits. The protein is ATP synthase subunit beta, mitochondrial (ATP2) of Chlamydomonas reinhardtii (Chlamydomonas smithii).